The primary structure comprises 640 residues: 2-hydroxyacyl-CoA lyase 2 (640 aa).

A helical membrane pass occupies residues 2–22; it reads VLFLIIAAIIIGLLLWKWLDV. Glu-102 is a thiamine diphosphate binding site. Positions 477–557 are thiamine pyrophosphate binding; the sequence is DFVGSAAYIV…VIGIVGNDAC (81 aa). Mg(2+)-binding residues include Asp-528 and Asn-554.

It belongs to the TPP enzyme family. Requires Mg(2+) as cofactor. It depends on thiamine diphosphate as a cofactor.

The protein resides in the endoplasmic reticulum membrane. The catalysed reaction is 2-hydroxyoctadecanoyl-CoA = heptadecanal + formyl-CoA. It carries out the reaction (2R)-hydroxyhexadecanoyl-CoA = pentadecanal + formyl-CoA. Its function is as follows. Endoplasmic reticulum 2-OH acyl-CoA lyase involved in the cleavage (C1 removal) reaction in the fatty acid alpha-oxydation in a thiamine pyrophosphate (TPP)-dependent manner. This chain is 2-hydroxyacyl-CoA lyase 2, found in Caenorhabditis elegans.